The chain runs to 339 residues: Putative P2Y purinoceptor 10 (339 aa).

Residues 1–39 (MANLDKYTETFKMGSNSTSTAEIYCNVTNVKFQYSLYAT) lie on the Extracellular side of the membrane. 2 N-linked (GlcNAc...) asparagine glycosylation sites follow: asparagine 16 and asparagine 26. A helical membrane pass occupies residues 40–60 (TYILIFIPGLLANSAALWVLC). The Cytoplasmic portion of the chain corresponds to 61-68 (RFISKKNK). A helical transmembrane segment spans residues 69 to 89 (AIIFMINLSVADLAHVLSLPL). At 90-103 (RIYYYISHHWPFQR) the chain is on the extracellular side. A helical membrane pass occupies residues 104–124 (ALCLLCFYLKYLNMYASICFL). An intrachain disulfide couples cysteine 106 to cysteine 181. The Cytoplasmic segment spans residues 125–149 (TCISLQRCFFLLKPFRARDWKRRYD). A helical membrane pass occupies residues 150–170 (VGISAAIWIVVGTACLPFPIL). The Extracellular segment spans residues 171–193 (RSTDLNNNKSCFADLGYKQMNAV). Residue asparagine 178 is glycosylated (N-linked (GlcNAc...) asparagine). The chain crosses the membrane as a helical span at residues 194-214 (ALVGMITVAELAGFVIPVIII). At 215–244 (AWCTWKTTISLRQPPMAFQGISERQKALRM) the chain is on the cytoplasmic side. A helical membrane pass occupies residues 245 to 265 (VFMCAAVFFICFTPYHINFIF). At 266–288 (YTMVKETIISSCPVVRIALYFHP) the chain is on the extracellular side. A helical transmembrane segment spans residues 289–309 (FCLCLASLCCLLDPILYYFMA). The Cytoplasmic portion of the chain corresponds to 310-339 (SEFRDQLSRHGSSVTRSRLMSKESGSSMIG).

It belongs to the G-protein coupled receptor 1 family. Weakly expressed in blood leukocytes.

It localises to the cell membrane. Putative receptor for purines coupled to G-proteins. This is Putative P2Y purinoceptor 10 (P2RY10) from Homo sapiens (Human).